Here is a 349-residue protein sequence, read N- to C-terminus: Anaerobic nitrite reductase Glb1-3 (349 aa).

Globin domains follow at residues 13-162 and 184-333; these read GFTE…AEMK and CFTE…AEMK. Positions 56, 70, 74, 104, 108, 109, 227, 241, 245, 275, 279, and 280 each coordinate heme b.

This sequence belongs to the plant globin family. As to quaternary structure, monomer. Heme b is required as a cofactor.

The protein localises to the cytoplasm. It localises to the nucleus. The catalysed reaction is Fe(III)-heme b-[protein] + nitric oxide + H2O = Fe(II)-heme b-[protein] + nitrite + 2 H(+). Phytoglobin that regulates the fine tuning of nitric oxide (NO) concentration in the cytosol in response to sudden changes in O(2) availability, and performs both symbiotic and nonsymbiotic functions. Exhibits NO dioxygenase activity in the presence of O(2) but nitrite reductase (NiR) activity in the absence of O(2) (e.g. during flooding or in waterlogged soil). May not function as an oxygen storage or transport protein. Extremely reactive toward the physiological ligands O(2), nitric oxide (NO), and nitrite with a very high affinity for O(2) through an hexacoordinate heme iron because of a very low dissociation constant. The sequence is that of Anaerobic nitrite reductase Glb1-3 from Medicago truncatula (Barrel medic).